We begin with the raw amino-acid sequence, 492 residues long: Protein nucleotidyltransferase YdiU (492 aa).

The ATP site is built by G88, G90, R91, K111, D123, G124, R174, and R181. The active-site Proton acceptor is the D250. Mg(2+) contacts are provided by N251 and D260. D260 serves as a coordination point for ATP.

It belongs to the SELO family. Mg(2+) serves as cofactor. The cofactor is Mn(2+).

It catalyses the reaction L-seryl-[protein] + ATP = 3-O-(5'-adenylyl)-L-seryl-[protein] + diphosphate. It carries out the reaction L-threonyl-[protein] + ATP = 3-O-(5'-adenylyl)-L-threonyl-[protein] + diphosphate. The enzyme catalyses L-tyrosyl-[protein] + ATP = O-(5'-adenylyl)-L-tyrosyl-[protein] + diphosphate. The catalysed reaction is L-histidyl-[protein] + UTP = N(tele)-(5'-uridylyl)-L-histidyl-[protein] + diphosphate. It catalyses the reaction L-seryl-[protein] + UTP = O-(5'-uridylyl)-L-seryl-[protein] + diphosphate. It carries out the reaction L-tyrosyl-[protein] + UTP = O-(5'-uridylyl)-L-tyrosyl-[protein] + diphosphate. Its function is as follows. Nucleotidyltransferase involved in the post-translational modification of proteins. It can catalyze the addition of adenosine monophosphate (AMP) or uridine monophosphate (UMP) to a protein, resulting in modifications known as AMPylation and UMPylation. The polypeptide is Protein nucleotidyltransferase YdiU (Rhodopseudomonas palustris (strain ATCC BAA-98 / CGA009)).